Here is a 225-residue protein sequence, read N- to C-terminus: Cyclin-dependent kinase inhibitor 3 (225 aa).

Disordered stretches follow at residues 47-94 (AAAA…QRRR) and 130-169 (ERKS…PLSP). The segment covering 55 to 67 (CRRRHRRGGRRGC) has biased composition (basic residues). The segment covering 71–82 (GAGSARACGARS) has biased composition (low complexity). A compositionally biased stretch (basic and acidic residues) spans 143–153 (VAAEHAGEHKH).

This sequence belongs to the CDI family. ICK/KRP subfamily.

The sequence is that of Cyclin-dependent kinase inhibitor 3 (KRP3) from Oryza sativa subsp. japonica (Rice).